Here is a 48-residue protein sequence, read N- to C-terminus: Toxin CSTX-15 (48 aa).

Cystine bridges form between Cys-3-Cys-18, Cys-10-Cys-27, Cys-17-Cys-42, and Cys-29-Cys-40.

It belongs to the neurotoxin 19 (CSTX) family. 12 subfamily. Heterodimer of A and B chains; disulfide-linked. Post-translationally, contains 4 disulfide bonds. As to expression, expressed by the venom gland.

It is found in the secreted. This chain is Toxin CSTX-15, found in Cupiennius salei (American wandering spider).